The following is a 679-amino-acid chain: MTKDLLLELGLEELPAYVVTPSEKQLGQKMVKFLEDHRLSFETVQIFSTPRRLAVRVKGLADQQTDLTEDFKGPSKKIALDAEGNFSKAAQGFVRGKGLSVDDIEFREVKGEEYVYVTKHETGKSAIDVLASVTEVLTELTFPVNMHWANNSFEYIRPVHTLVVLLDDQALELDFLDIHSGRISRGHRFLGSDTEISSASSYEDDLRQQFVIADAKERQQMIVNQIHAIEEKKNISVEIDEDLLNEVLNLVEYPTAFLGSFDEKYLDVPEEVLVTSMKNHQRYFVVRDRDGKLLPNFISVRNGNAEHIENVIKGNEKVLVARLEDGEFFWQEDQKLNIADLVEKLKQVTFHEKIGSLYEHMDRVKVISQYLAEKADLSDEEKLAVLRAASIYKFDLLTGMVDEFDELQGIMGEKYALLAGEQPAVAAAIREHYMPTSADGELPETRVGAILALADKFDTLLSFFSVGLIPSGSNDPYALRRATQGIVRILEAFGWDIPLDELVTNLYGLSFASLDYANQKEVMAFISARIEKMIGSKVPKDIREAVLESDTYIVSLILEASQALVQKSKDAQYKVSVESLSRAFNLAEKVTHSVLVDSSLFENNQEKALYQAILSLELTEDMHDNLDKLFALSPIINDFFDNTMVMTDDEKMKQNRLAILNSLVAKARTVAAFNLLNTK.

This sequence belongs to the class-II aminoacyl-tRNA synthetase family. Tetramer of two alpha and two beta subunits.

The protein resides in the cytoplasm. It carries out the reaction tRNA(Gly) + glycine + ATP = glycyl-tRNA(Gly) + AMP + diphosphate. This is Glycine--tRNA ligase beta subunit from Streptococcus agalactiae serotype V (strain ATCC BAA-611 / 2603 V/R).